Here is a 157-residue protein sequence, read N- to C-terminus: Crossover junction endodeoxyribonuclease RuvC (157 aa).

Active-site residues include Asp-7, Glu-67, and Asp-139. 3 residues coordinate Mg(2+): Asp-7, Glu-67, and Asp-139.

It belongs to the RuvC family. In terms of assembly, homodimer which binds Holliday junction (HJ) DNA. The HJ becomes 2-fold symmetrical on binding to RuvC with unstacked arms; it has a different conformation from HJ DNA in complex with RuvA. In the full resolvosome a probable DNA-RuvA(4)-RuvB(12)-RuvC(2) complex forms which resolves the HJ. The cofactor is Mg(2+).

It is found in the cytoplasm. The catalysed reaction is Endonucleolytic cleavage at a junction such as a reciprocal single-stranded crossover between two homologous DNA duplexes (Holliday junction).. In terms of biological role, the RuvA-RuvB-RuvC complex processes Holliday junction (HJ) DNA during genetic recombination and DNA repair. Endonuclease that resolves HJ intermediates. Cleaves cruciform DNA by making single-stranded nicks across the HJ at symmetrical positions within the homologous arms, yielding a 5'-phosphate and a 3'-hydroxyl group; requires a central core of homology in the junction. The consensus cleavage sequence is 5'-(A/T)TT(C/G)-3'. Cleavage occurs on the 3'-side of the TT dinucleotide at the point of strand exchange. HJ branch migration catalyzed by RuvA-RuvB allows RuvC to scan DNA until it finds its consensus sequence, where it cleaves and resolves the cruciform DNA. In Prochlorococcus marinus subsp. pastoris (strain CCMP1986 / NIES-2087 / MED4), this protein is Crossover junction endodeoxyribonuclease RuvC.